The sequence spans 396 residues: Ribosomal RNA large subunit methyltransferase I (396 aa).

A PUA domain is found at 2–81; sequence SVRLVLAKGR…ESIDIAFFSR (80 aa).

This sequence belongs to the methyltransferase superfamily. RlmI family.

The protein localises to the cytoplasm. It carries out the reaction cytidine(1962) in 23S rRNA + S-adenosyl-L-methionine = 5-methylcytidine(1962) in 23S rRNA + S-adenosyl-L-homocysteine + H(+). Its function is as follows. Specifically methylates the cytosine at position 1962 (m5C1962) of 23S rRNA. This chain is Ribosomal RNA large subunit methyltransferase I, found in Shigella flexneri serotype 5b (strain 8401).